Reading from the N-terminus, the 219-residue chain is Redox-sensing transcriptional repressor Rex (219 aa).

Residues 17–56 constitute a DNA-binding region (H-T-H motif); that stretch reads VYLRVLDNLVKRDIEVVSSKSLSKETGFTAEQIRKDLAFF. An NAD(+)-binding site is contributed by 91–96; sequence GAGHLG.

This sequence belongs to the transcriptional regulatory Rex family. Homodimer.

The protein localises to the cytoplasm. Functionally, modulates transcription in response to changes in cellular NADH/NAD(+) redox state. The polypeptide is Redox-sensing transcriptional repressor Rex (Natranaerobius thermophilus (strain ATCC BAA-1301 / DSM 18059 / JW/NM-WN-LF)).